A 504-amino-acid polypeptide reads, in one-letter code: Sperm motility kinase 3A (504 aa).

The region spanning 28 to 276 (YVMLETIGHG…VAEVMVHPWV (249 aa)) is the Protein kinase domain. ATP-binding positions include 34 to 42 (IGHGGCATV) and Lys-57. Catalysis depends on Asp-147, which acts as the Proton acceptor. In terms of domain architecture, UBA spans 294-334 (KPDPAIVKAMGHIGFQAQDIEDSLRQRKFNQTMASYCLLKK). Disordered regions lie at residues 389-421 (VCGKSTSKKRDRRVSWPSVLGRPRHTAPTMDHT) and 441-468 (NSSEESTQGHTRASAADKPVHSRGWPRG). Residues 441-451 (NSSEESTQGHT) show a composition bias toward polar residues.

Belongs to the protein kinase superfamily. CAMK Ser/Thr protein kinase family. Smok subfamily. In terms of tissue distribution, testis-specific. Expressed in the testis from 22 days postpartum (22 dpp).

It carries out the reaction L-seryl-[protein] + ATP = O-phospho-L-seryl-[protein] + ADP + H(+). The enzyme catalyses L-threonyl-[protein] + ATP = O-phospho-L-threonyl-[protein] + ADP + H(+). Its function is as follows. May play a role in sperm motility, especially in the regulation of flagellar function. The chain is Sperm motility kinase 3A from Mus musculus (Mouse).